We begin with the raw amino-acid sequence, 127 residues long: Large ribosomal subunit protein bL12 (127 aa).

This sequence belongs to the bacterial ribosomal protein bL12 family. In terms of assembly, homodimer. Part of the ribosomal stalk of the 50S ribosomal subunit. Forms a multimeric L10(L12)X complex, where L10 forms an elongated spine to which 2 to 4 L12 dimers bind in a sequential fashion. Binds GTP-bound translation factors.

Functionally, forms part of the ribosomal stalk which helps the ribosome interact with GTP-bound translation factors. Is thus essential for accurate translation. The polypeptide is Large ribosomal subunit protein bL12 (Caulobacter vibrioides (strain ATCC 19089 / CIP 103742 / CB 15) (Caulobacter crescentus)).